The sequence spans 154 residues: Small ribosomal subunit protein uS9 (154 aa).

The interval 133-154 is disordered; it reads RAKESKKYGLKKARKAPQYSKR. The segment covering 140 to 154 has biased composition (basic residues); the sequence is YGLKKARKAPQYSKR.

This sequence belongs to the universal ribosomal protein uS9 family.

This chain is Small ribosomal subunit protein uS9, found in Salinispora tropica (strain ATCC BAA-916 / DSM 44818 / JCM 13857 / NBRC 105044 / CNB-440).